Here is a 390-residue protein sequence, read N- to C-terminus: Pyruvate dehydrogenase E1 component subunit alpha, somatic form, mitochondrial (390 aa).

The transit peptide at 1 to 29 (MRKMLAAVSRVLSGASQKPASRVLVASRN) directs the protein to the mitochondrion. Lysine 63 bears the N6-acetyllysine; alternate mark. Residue lysine 63 is modified to N6-succinyllysine; alternate. Histidine 92, tyrosine 118, arginine 119, alanine 157, glycine 165, valine 167, aspartate 196, glycine 197, alanine 198, asparagine 225, and tyrosine 227 together coordinate pyruvate. Thiamine diphosphate is bound by residues tyrosine 118 and arginine 119. Thiamine diphosphate is bound by residues glycine 165, valine 167, aspartate 196, glycine 197, alanine 198, and asparagine 225. Mg(2+) is bound at residue aspartate 196. Residues asparagine 225 and tyrosine 227 each coordinate Mg(2+). Serine 232 is subject to Phosphoserine; by PDK1. The residue at position 244 (lysine 244) is an N6-acetyllysine; alternate. At lysine 244 the chain carries N6-succinyllysine; alternate. Position 277 is an N6-succinyllysine (lysine 277). Histidine 292 lines the thiamine diphosphate pocket. Serine 293 carries the phosphoserine; by PDK1, PDK2, PDK3 and PDK4 modification. Serine 295 is subject to Phosphoserine. Phosphoserine; by PDK1, PDK2, PDK3 and PDK4 is present on serine 300. Tyrosine 301 carries the phosphotyrosine modification. Lysine 313 carries the N6-acetyllysine; alternate modification. Position 313 is an N6-succinyllysine; alternate (lysine 313). Residues lysine 321 and lysine 336 each carry the N6-acetyllysine modification. At lysine 385 the chain carries N6-succinyllysine.

In terms of assembly, heterotetramer of two PDHA1 and two PDHB subunits. The heterotetramer interacts with DLAT, and is part of the multimeric pyruvate dehydrogenase complex that contains multiple copies of pyruvate dehydrogenase (E1), dihydrolipoamide acetyltransferase (DLAT, E2) and lipoamide dehydrogenase (DLD, E3). These subunits are bound to an inner core composed of about 48 DLAT and 12 PDHX molecules. Requires thiamine diphosphate as cofactor. Mg(2+) serves as cofactor. Phosphorylation at Ser-232, Ser-293 and Ser-300 by PDK family kinases inactivates the enzyme; for this phosphorylation at a single site is sufficient. Dephosphorylation at all three sites, i.e. at Ser-232, Ser-293 and Ser-300, is required for reactivation. In terms of processing, acetylation alters the phosphorylation pattern. Deacetylated by SIRT3. Ubiquitous.

The protein resides in the mitochondrion matrix. It catalyses the reaction N(6)-[(R)-lipoyl]-L-lysyl-[protein] + pyruvate + H(+) = N(6)-[(R)-S(8)-acetyldihydrolipoyl]-L-lysyl-[protein] + CO2. Its activity is regulated as follows. Pyruvate dehydrogenase activity is inhibited by phosphorylation of PDHA1; it is reactivated by dephosphorylation. In terms of biological role, the pyruvate dehydrogenase complex catalyzes the overall conversion of pyruvate to acetyl-CoA and CO(2), and thereby links the glycolytic pathway to the tricarboxylic cycle. This is Pyruvate dehydrogenase E1 component subunit alpha, somatic form, mitochondrial (PDHA1) from Homo sapiens (Human).